We begin with the raw amino-acid sequence, 317 residues long: UV DNA damage endonuclease (317 aa).

This sequence belongs to the uve1/UvsE family.

Component in a DNA repair pathway. Removal of UV LIGHT damaged nucleotides. Recognizes pyrimidine dimers and cleave a phosphodiester bond immediately 5' to the lesion. This chain is UV DNA damage endonuclease, found in Bacillus cereus (strain Q1).